Here is a 309-residue protein sequence, read N- to C-terminus: Carbamate kinase 3 (309 aa).

Belongs to the carbamate kinase family.

Its subcellular location is the cytoplasm. It carries out the reaction hydrogencarbonate + NH4(+) + ATP = carbamoyl phosphate + ADP + H2O + H(+). It functions in the pathway metabolic intermediate metabolism; carbamoyl phosphate degradation; CO(2) and NH(3) from carbamoyl phosphate: step 1/1. This is Carbamate kinase 3 (arcC3) from Staphylococcus aureus (strain USA300).